The sequence spans 215 residues: Cytochrome b6 (215 aa).

Residues 32–52 (IFYCLGGITFTCFLVQVATGF) form a helical membrane-spanning segment. Residue Cys-35 coordinates heme c. Residues His-86 and His-100 each contribute to the heme b site. The next 3 membrane-spanning stretches (helical) occupy residues 90–110 (ASMM…TGGF), 116–136 (LTWT…VTGY), and 186–206 (LHTF…FLMI). The heme b site is built by His-187 and His-202.

This sequence belongs to the cytochrome b family. PetB subfamily. In terms of assembly, the 4 large subunits of the cytochrome b6-f complex are cytochrome b6, subunit IV (17 kDa polypeptide, PetD), cytochrome f and the Rieske protein, while the 4 small subunits are PetG, PetL, PetM and PetN. The complex functions as a dimer. Heme b serves as cofactor. The cofactor is heme c.

The protein resides in the plastid. It is found in the chloroplast thylakoid membrane. Its function is as follows. Component of the cytochrome b6-f complex, which mediates electron transfer between photosystem II (PSII) and photosystem I (PSI), cyclic electron flow around PSI, and state transitions. This is Cytochrome b6 from Stigeoclonium helveticum (Green alga).